Consider the following 373-residue polypeptide: MRMEDEDYNTSISYGDEYPDYLDSIVVLEDLSPLEARVTRIFLVVVYSIVCFLGILGNGLVIIIATFKMKKTVNMVWFLNLAVADFLFNVFLPIHITYAAMDYHWVFGTAMCKISNFLLIHNMFTSVFLLTIISSDRCISVLLPVWSQNHRSVRLAYMACMVIWVLAFFLSSPSLVFRDTANLHGKISCFNNFSLSTPGSSSWPTHSQMDPVGYSRHMVVTVTRFLCGFLVPVLIITACYLTIVCKLQRNRLAKTKKPFKIIVTIIITFFLCWCPYHTLNLLELHHTAMPGSVFSLGLPLATALAIANSCMNPILYVFMGQDFKKFKVALFSRLVNALSEDTGHSSYPSHRSFTKMSSMNERTSMNERETGML.

Topologically, residues 1 to 41 (MRMEDEDYNTSISYGDEYPDYLDSIVVLEDLSPLEARVTRI) are extracellular. Residue Asn-9 is glycosylated (N-linked (GlcNAc...) asparagine). The chain crosses the membrane as a helical span at residues 42–64 (FLVVVYSIVCFLGILGNGLVIII). At 65 to 75 (ATFKMKKTVNM) the chain is on the cytoplasmic side. The helical transmembrane segment at 76 to 97 (VWFLNLAVADFLFNVFLPIHIT) threads the bilayer. Topologically, residues 98–114 (YAAMDYHWVFGTAMCKI) are extracellular. Residues Cys-112 and Cys-189 are joined by a disulfide bond. Residues 115–135 (SNFLLIHNMFTSVFLLTIISS) form a helical membrane-spanning segment. Residues 136 to 154 (DRCISVLLPVWSQNHRSVR) are Cytoplasmic-facing. Residues 155–176 (LAYMACMVIWVLAFFLSSPSLV) traverse the membrane as a helical segment. The Extracellular segment spans residues 177–224 (FRDTANLHGKISCFNNFSLSTPGSSSWPTHSQMDPVGYSRHMVVTVTR). The N-linked (GlcNAc...) asparagine glycan is linked to Asn-192. A helical membrane pass occupies residues 225 to 245 (FLCGFLVPVLIITACYLTIVC). Residues 246–261 (KLQRNRLAKTKKPFKI) lie on the Cytoplasmic side of the membrane. Residues 262–282 (IVTIIITFFLCWCPYHTLNLL) traverse the membrane as a helical segment. Residues 283-300 (ELHHTAMPGSVFSLGLPL) lie on the Extracellular side of the membrane. The chain crosses the membrane as a helical span at residues 301–320 (ATALAIANSCMNPILYVFMG). Topologically, residues 321–373 (QDFKKFKVALFSRLVNALSEDTGHSSYPSHRSFTKMSSMNERTSMNERETGML) are cytoplasmic. The residue at position 339 (Ser-339) is a Phosphoserine. The interval 341–373 (DTGHSSYPSHRSFTKMSSMNERTSMNERETGML) is disordered. Residue Thr-342 is modified to Phosphothreonine. The span at 344–363 (HSSYPSHRSFTKMSSMNERT) shows a compositional bias: polar residues. 3 positions are modified to phosphoserine: Ser-349, Ser-352, and Ser-358. Residues 364–373 (SMNERETGML) show a composition bias toward basic and acidic residues.

This sequence belongs to the chemokine-like receptor (CMKLR) family. In terms of tissue distribution, prominently expressed in developing osseous and cartilaginous tissue. Also found in adult parathyroid glands. Expressed in cardiovascular system, brain, kidney, gastrointestinal tissues and myeloid tissues. Expressed in a broad array of tissues associated with hematopoietic and immune function including, spleen, thymus, appendix, lymph node, bone marrow and fetal liver. Among leukocyte populations abundant expression in monocyte-derived macrophage and immature dendritic cells (DCs). High expression in blood monocytes and low levels in polymorphonuclear cells and T-cells. Expressed on endothelial cells. Highly expressed in differentiating adipocytes.

The protein localises to the cell membrane. Functionally, receptor for the chemoattractant adipokine chemerin/RARRES2 and for the omega-3 fatty acid derived molecule resolvin E1. Interaction with RARRES2 initiates activation of G proteins G(i)/G(o) and beta-arrestin pathways inducing cellular responses via second messenger pathways such as intracellular calcium mobilization, phosphorylation of MAP kinases MAPK1/MAPK3 (ERK1/2), TYRO3, MAPK14/P38MAPK and PI3K leading to multifunctional effects, like reduction of immune responses, enhancing of adipogenesis and angionesis. Resolvin E1 down-regulates cytokine production in macrophages by reducing the activation of MAPK1/3 (ERK1/2) and NF-kappa-B. Positively regulates adipogenesis and adipocyte metabolism. (Microbial infection) Acts as a coreceptor for several SIV strains (SIVMAC316, SIVMAC239, SIVMACL7E-FR and SIVSM62A), as well as a primary HIV-1 strain (92UG024-2). In Homo sapiens (Human), this protein is Chemerin-like receptor 1.